Reading from the N-terminus, the 264-residue chain is Hemin import ATP-binding protein HmuV (264 aa).

An ABC transporter domain is found at 10 to 246; that stretch reads LQAQNLSYSI…HTLRKWYQAD (237 aa). Residue 42–49 coordinates ATP; it reads GPNGAGKS.

This sequence belongs to the ABC transporter superfamily. Heme (hemin) importer (TC 3.A.1.14.5) family. As to quaternary structure, the complex is composed of two ATP-binding proteins (HmuV), two transmembrane proteins (HmuU) and a solute-binding protein (HmuT).

The protein localises to the cell inner membrane. In terms of biological role, part of the ABC transporter complex HmuTUV involved in hemin import. Responsible for energy coupling to the transport system. In Photorhabdus laumondii subsp. laumondii (strain DSM 15139 / CIP 105565 / TT01) (Photorhabdus luminescens subsp. laumondii), this protein is Hemin import ATP-binding protein HmuV.